The following is a 350-amino-acid chain: Protein pelota homolog (350 aa).

It belongs to the eukaryotic release factor 1 family. Pelota subfamily. Monomer. A divalent metal cation serves as cofactor.

It is found in the cytoplasm. Its function is as follows. May function in recognizing stalled ribosomes, interact with stem-loop structures in stalled mRNA molecules, and effect endonucleolytic cleavage of the mRNA. May play a role in the release non-functional ribosomes and degradation of damaged mRNAs. Has endoribonuclease activity. In Methanosarcina acetivorans (strain ATCC 35395 / DSM 2834 / JCM 12185 / C2A), this protein is Protein pelota homolog.